We begin with the raw amino-acid sequence, 304 residues long: tRNA dimethylallyltransferase (304 aa).

ATP is bound at residue 2-9; sequence GPTASGKT. 4-9 lines the substrate pocket; sequence TASGKT. Residues 28-31 are interaction with substrate tRNA; the sequence is DSAL.

The protein belongs to the IPP transferase family. As to quaternary structure, monomer. Requires Mg(2+) as cofactor.

It catalyses the reaction adenosine(37) in tRNA + dimethylallyl diphosphate = N(6)-dimethylallyladenosine(37) in tRNA + diphosphate. Functionally, catalyzes the transfer of a dimethylallyl group onto the adenine at position 37 in tRNAs that read codons beginning with uridine, leading to the formation of N6-(dimethylallyl)adenosine (i(6)A). This Blochmanniella pennsylvanica (strain BPEN) protein is tRNA dimethylallyltransferase.